The primary structure comprises 361 residues: Histidinol-phosphate aminotransferase (361 aa).

K216 carries the post-translational modification N6-(pyridoxal phosphate)lysine.

Belongs to the class-II pyridoxal-phosphate-dependent aminotransferase family. Histidinol-phosphate aminotransferase subfamily. Homodimer. Pyridoxal 5'-phosphate is required as a cofactor.

The enzyme catalyses L-histidinol phosphate + 2-oxoglutarate = 3-(imidazol-4-yl)-2-oxopropyl phosphate + L-glutamate. Its pathway is amino-acid biosynthesis; L-histidine biosynthesis; L-histidine from 5-phospho-alpha-D-ribose 1-diphosphate: step 7/9. The protein is Histidinol-phosphate aminotransferase of Francisella philomiragia subsp. philomiragia (strain ATCC 25017 / CCUG 19701 / FSC 153 / O#319-036).